The sequence spans 67 residues: ATP synthase F(0) complex subunit 8 (67 aa).

A helical transmembrane segment spans residues 8–24; sequence TWFTTVLASSITLFILM. An N6-acetyllysine; alternate modification is found at Lys54. Lys54 carries the post-translational modification N6-succinyllysine; alternate. Lys57 carries the N6-acetyllysine modification.

Belongs to the ATPase protein 8 family. Component of the ATP synthase complex composed at least of ATP5F1A/subunit alpha, ATP5F1B/subunit beta, ATP5MC1/subunit c (homooctomer), MT-ATP6/subunit a, MT-ATP8/subunit 8, ATP5ME/subunit e, ATP5MF/subunit f, ATP5MG/subunit g, ATP5MK/subunit k, ATP5MJ/subunit j, ATP5F1C/subunit gamma, ATP5F1D/subunit delta, ATP5F1E/subunit epsilon, ATP5PF/subunit F6, ATP5PB/subunit b, ATP5PD/subunit d, ATP5PO/subunit OSCP. ATP synthase complex consists of a soluble F(1) head domain (subunits alpha(3) and beta(3)) - the catalytic core - and a membrane F(0) domain - the membrane proton channel (subunits c, a, 8, e, f, g, k and j). These two domains are linked by a central stalk (subunits gamma, delta, and epsilon) rotating inside the F1 region and a stationary peripheral stalk (subunits F6, b, d, and OSCP). Interacts with PRICKLE3.

The protein localises to the mitochondrion membrane. In terms of biological role, subunit 8, of the mitochondrial membrane ATP synthase complex (F(1)F(0) ATP synthase or Complex V) that produces ATP from ADP in the presence of a proton gradient across the membrane which is generated by electron transport complexes of the respiratory chain. ATP synthase complex consist of a soluble F(1) head domain - the catalytic core - and a membrane F(1) domain - the membrane proton channel. These two domains are linked by a central stalk rotating inside the F(1) region and a stationary peripheral stalk. During catalysis, ATP synthesis in the catalytic domain of F(1) is coupled via a rotary mechanism of the central stalk subunits to proton translocation. In vivo, can only synthesize ATP although its ATP hydrolase activity can be activated artificially in vitro. Part of the complex F(0) domain. The chain is ATP synthase F(0) complex subunit 8 from Cricetulus griseus (Chinese hamster).